Consider the following 238-residue polypeptide: Thiamine import ATP-binding protein ThiQ (238 aa).

One can recognise an ABC transporter domain in the interval 2 to 230 (LALDKVRYEY…HPHPELAQFV (229 aa)). 32-39 (GPSGAGKS) contributes to the ATP binding site.

The protein belongs to the ABC transporter superfamily. Thiamine importer (TC 3.A.1.19.1) family. As to quaternary structure, the complex is composed of two ATP-binding proteins (ThiQ), two transmembrane proteins (ThiP) and a solute-binding protein (ThiB).

Its subcellular location is the cell inner membrane. The enzyme catalyses thiamine(out) + ATP + H2O = thiamine(in) + ADP + phosphate + H(+). Its function is as follows. Part of the ABC transporter complex ThiBPQ involved in thiamine import. Responsible for energy coupling to the transport system. This Vibrio cholerae serotype O1 (strain ATCC 39315 / El Tor Inaba N16961) protein is Thiamine import ATP-binding protein ThiQ.